The following is a 152-amino-acid chain: 3-dehydroquinate dehydratase (152 aa).

Y25 serves as the catalytic Proton acceptor. Residues N76, H82, and D89 each contribute to the substrate site. Residue H102 is the Proton donor of the active site. Substrate-binding positions include 103–104 (LS) and R113.

It belongs to the type-II 3-dehydroquinase family. As to quaternary structure, homododecamer.

It carries out the reaction 3-dehydroquinate = 3-dehydroshikimate + H2O. Its pathway is metabolic intermediate biosynthesis; chorismate biosynthesis; chorismate from D-erythrose 4-phosphate and phosphoenolpyruvate: step 3/7. Catalyzes a trans-dehydration via an enolate intermediate. The polypeptide is 3-dehydroquinate dehydratase (Gloeothece citriformis (strain PCC 7424) (Cyanothece sp. (strain PCC 7424))).